The chain runs to 305 residues: tRNA dimethylallyltransferase (305 aa).

11 to 18 is a binding site for ATP; that stretch reads GPTAVGKT. 13–18 is a substrate binding site; it reads TAVGKT. An interaction with substrate tRNA region spans residues 36–39; the sequence is DSMQ.

This sequence belongs to the IPP transferase family. Monomer. Requires Mg(2+) as cofactor.

It catalyses the reaction adenosine(37) in tRNA + dimethylallyl diphosphate = N(6)-dimethylallyladenosine(37) in tRNA + diphosphate. Its function is as follows. Catalyzes the transfer of a dimethylallyl group onto the adenine at position 37 in tRNAs that read codons beginning with uridine, leading to the formation of N6-(dimethylallyl)adenosine (i(6)A). This Listeria monocytogenes serotype 4b (strain CLIP80459) protein is tRNA dimethylallyltransferase.